We begin with the raw amino-acid sequence, 255 residues long: Cullin-like protein 3 (255 aa).

This sequence belongs to the cullin family.

This is Cullin-like protein 3 from Arabidopsis thaliana (Mouse-ear cress).